The chain runs to 119 residues: Large ribosomal subunit protein uL18 (119 aa).

The protein belongs to the universal ribosomal protein uL18 family. As to quaternary structure, part of the 50S ribosomal subunit; part of the 5S rRNA/L5/L18/L25 subcomplex. Contacts the 5S and 23S rRNAs.

Functionally, this is one of the proteins that bind and probably mediate the attachment of the 5S RNA into the large ribosomal subunit, where it forms part of the central protuberance. The protein is Large ribosomal subunit protein uL18 of Desulfovibrio desulfuricans (strain ATCC 27774 / DSM 6949 / MB).